A 707-amino-acid chain; its full sequence is MYTVNPQLVVLVDRQQQLREVRYLSLYGTLDEASPLYYFAKQHLRAETLAVERRHILLTLKISQLKGYLCHLLGLREDIIIYSHKNNLEYSYVDNTIFNPFTMTQKKTLIKADSFLYNVYVDACDFLVVWVARAQDTPVPEFGSFEEVDANILKFEARLVEMFPELDLEFSIQSKFNNVFRTNLRSTGLRNIVKRNQDNRILFIKTDEFFITMSGNHFVLNNEALNLSIWDAQGRLAISSDGDTITVNDVRLFTELVTDSNLQMERIKGDITYRIFLLSPITSKIKLDIETSFIFVETATNNILLSADKKISIILAKNHISIKVKNHIPNIEKYFTFLVIFINRMFNAVQQAVDFTKIETIYWSRICQNTRDKNRKPVIVSSLDANMERVSDNFFRSPTREVFVNSNNIMFSCVDPLGKYNSVGFLAIFYKLQKMCIPCCFLRSQAHTDTFISCVHHRELDRQLVSPYVLNFGKIVTEAKISFLPILFDQFFNEGLRIEFEADHKRLKATDGYHVVKCCTRSEITRLRTQRDIIQFVNAEQNTLIAGDMVYFPMHGARSAGAEHQRVYILIQEIVHEVVMVQKAHDSDRIRFRELERNRLWEFFPYRVPSARIKEEHGLVLTTDGFYVDGKLFSEPLSTRYVAFTENVGTAGVAAKYFAPVFKYVVTEARELFIKTWLLNVMMQLGLTGESSAAQTREALERYYRLS.

The protein belongs to the poxviridae VETF large subunit family. As to quaternary structure, heterodimer of a 70 kDa and a 82 kDa subunit. Part of the early transcription complex composed of ETF, RAP94, and the DNA-directed RNA polymerase.

The protein resides in the virion. Acts with RNA polymerase to initiate transcription from early gene promoters. Is recruited by the RPO-associated protein of 94 kDa (RAP94) to form the early transcription complex, which also contains the core RNA polymerase. ETF heterodimer binds to early gene promoters. This Molluscum contagiosum virus subtype 1 (MOCV) protein is Early transcription factor 82 kDa subunit (VETFL).